We begin with the raw amino-acid sequence, 945 residues long: MYGLVIEGVRFMIQENWGPQVLLQVQKLTSLSEKSVSTHDQYSEHVVPQMFKAIHEITGTPYEQIGVLAGRFFVQFLIRNGYGDLMNVMGRRFSDFIKGLDNIHEYFRFSYPKLRAPSFYCKSESEDGLILHYRSRRTGYLSYVIGQLVELARVFYQLDIGIQVLKKKEKGRFTFVVLKISFDNVGLGQDLKLKERVKNLNEYLPVDTKSFLQMFPFHIAFNKKLEILMAGQGLLNLMPNIQGLLMTDVFDLQRPCIKFTAEGIMVHQNCVFQIESLHPVVKQTEENITVQINDITEDKVSLEKKTVMDNEYESLPYVTLRGPITVLKSSETFLLLATCVVDTLDTMFKMGLYLNDFGESDCNREIIMATIQKSDTLKTMLENEKRRSEVLTEMTREISEAKKTARTLLTQMMPYEVAQTMMRSGSVDHCEAFECVSIGFIRVCDFSKISLFIEAFEVVNLLNTIYSHLDSIVDTHGVYKVETIGESYMISAGCPYRDDYDAEMVSDCCLEMVSHIKSFEYQSHDAVKKVLIKCGIFTGPVVGGVVGVRTPRYCLFGDTVNTASRMESSNQTPMTIQIGQRTKDRVEKQASGAFRIKPKGNVFVKGKGDMRVYEIEKKKGRARYKKSDPLRKKMVAEKKEAEELLDEDNEGHRSSALSRMSLGESIDSSSSRRGSLSGSQLELNKTIAQTIELTSKASAALDLNMQDENNRPPTWSASHSQDIRKPRKTESKITLNSRLSSSDLAVSRVETSKDSDGETPRPTSSELKEVNRIREEALAQEKEEERTTKEENQKIEEVGEDHVSEATSLLDSEVSHGDNNISFSQMPSDSIPHEDRTSLPSATPSEIGDAISKKKLEKEDSNSSMSSLDERTTVSAKPTTTRRLLNQKDLEKEKKRSSMAGSSVTSSSAHSHSIRSKKDTRDKSRCKCEDIRADNKLKTKVCSIM.

Histidine 104 serves as a coordination point for heme. Positions 388–413 (SEVLTEMTREISEAKKTARTLLTQMM) form a coiled coil. The Guanylate cyclase domain maps to 437 to 567 (SIGFIRVCDF…DTVNTASRME (131 aa)). 2 disordered regions span residues 639 to 679 (KEAE…LSGS) and 706 to 930 (QDEN…KCED). A compositionally biased stretch (low complexity) spans 661–679 (SLGESIDSSSSRRGSLSGS). Positions 711–720 (RPPTWSASHS) are enriched in polar residues. Over residues 721–731 (QDIRKPRKTES) the composition is skewed to basic and acidic residues. A compositionally biased stretch (polar residues) spans 732-744 (KITLNSRLSSSDL). Basic and acidic residues-rich tracts occupy residues 750–759 (ETSKDSDGET) and 766–804 (ELKE…DHVS). A coiled-coil region spans residues 763–802 (TSSELKEVNRIREEALAQEKEEERTTKEENQKIEEVGEDH). The segment covering 817 to 828 (GDNNISFSQMPS) has biased composition (polar residues). The segment covering 851–861 (ISKKKLEKEDS) has biased composition (basic and acidic residues). Over residues 862 to 884 (NSSMSSLDERTTVSAKPTTTRRL) the composition is skewed to polar residues. A compositionally biased stretch (basic and acidic residues) spans 886-896 (NQKDLEKEKKR). Low complexity predominate over residues 898-911 (SMAGSSVTSSSAHS). Positions 916 to 930 (SKKDTRDKSRCKCED) are enriched in basic and acidic residues.

It belongs to the adenylyl cyclase class-4/guanylyl cyclase family. As to quaternary structure, heterodimer; with other soluble guanylate cyclases. It depends on heme as a cofactor. As to expression, expressed in BAG sensory neuron.

The protein resides in the cytoplasm. The enzyme catalyses GTP = 3',5'-cyclic GMP + diphosphate. May be regulated by molecular oxygen. Probably not activated by nitric oxide (NO). Synthesizes cyclic GMP (cGMP) from GTP. May be involved in sensitivity to quinine by regulating egl-4 activity through the production of cGMP. The protein is Soluble guanylate cyclase gcy-33 (gcy-33) of Caenorhabditis elegans.